Consider the following 282-residue polypeptide: NAD-dependent protein deacetylase 1 (282 aa).

The Deacetylase sirtuin-type domain maps to 1 to 282 (MTVGRAESPE…ADELSPLPTH (282 aa)). Residues 25–45 (GAGI…SPPS) and 101–104 (QNVD) each bind NAD(+). Residue H119 is the Proton acceptor of the active site. Positions 127, 130, 181, and 184 each coordinate Zn(2+). NAD(+)-binding positions include 221 to 223 (GSS), 247 to 249 (NRG), and C265.

Belongs to the sirtuin family. Class II subfamily. The cofactor is Zn(2+).

The protein localises to the cytoplasm. The catalysed reaction is N(6)-acetyl-L-lysyl-[protein] + NAD(+) + H2O = 2''-O-acetyl-ADP-D-ribose + nicotinamide + L-lysyl-[protein]. In terms of biological role, NAD-dependent protein deacetylase which modulates the activities of several enzymes which are inactive in their acetylated form. In Mycobacterium avium (strain 104), this protein is NAD-dependent protein deacetylase 1.